Consider the following 201-residue polypeptide: Recombination protein RecR (201 aa).

Residues Cys59–Cys74 form a C4-type zinc finger. A Toprim domain is found at Ser82 to Pro177.

The protein belongs to the RecR family.

Functionally, may play a role in DNA repair. It seems to be involved in an RecBC-independent recombinational process of DNA repair. It may act with RecF and RecO. This Rickettsia massiliae (strain Mtu5) protein is Recombination protein RecR.